We begin with the raw amino-acid sequence, 136 residues long: Histone H3.2 (136 aa).

The segment at 1–45 (MARTKQTARKSTGGKAPRKQLATKAARKSAPATGGVKKPHRYRPG) is disordered. At Arg-3 the chain carries Asymmetric dimethylarginine; by PRMT6; alternate. Position 3 is a citrulline; alternate (Arg-3). Thr-4 is modified (phosphothreonine; by HASPIN and VRK1). An Allysine; alternate modification is found at Lys-5. Lys-5 bears the N6,N6,N6-trimethyllysine; alternate mark. Lys-5 is subject to N6,N6-dimethyllysine; alternate. An N6-(2-hydroxyisobutyryl)lysine; alternate modification is found at Lys-5. Lys-5 is modified (N6-(beta-hydroxybutyryl)lysine; alternate). Lys-5 carries the post-translational modification N6-acetyllysine; alternate. At Lys-5 the chain carries N6-crotonyllysine; alternate. At Lys-5 the chain carries N6-methyllysine; alternate. A 5-glutamyl dopamine; alternate modification is found at Gln-6. The residue at position 6 (Gln-6) is a 5-glutamyl serotonin; alternate. A Phosphothreonine; by PKC modification is found at Thr-7. Arg-9 carries the citrulline; alternate modification. A Symmetric dimethylarginine; by PRMT5; alternate modification is found at Arg-9. Lys-10 is subject to N6,N6,N6-trimethyllysine; alternate. Lys-10 carries the N6,N6-dimethyllysine; alternate modification. Lys-10 bears the N6-(2-hydroxyisobutyryl)lysine; alternate mark. An N6-(beta-hydroxybutyryl)lysine; alternate modification is found at Lys-10. The residue at position 10 (Lys-10) is an N6-acetyllysine; alternate. The residue at position 10 (Lys-10) is an N6-crotonyllysine; alternate. The residue at position 10 (Lys-10) is an N6-methyllysine; alternate. Position 10 is an N6-lactoyllysine; alternate (Lys-10). Residue Ser-11 is modified to ADP-ribosylserine; alternate. Phosphoserine; alternate; by AURKB, AURKC, RPS6KA3, RPS6KA4 and RPS6KA5 is present on Ser-11. Thr-12 bears the Phosphothreonine; by PKC mark. Lys-15 carries the N6-(2-hydroxyisobutyryl)lysine; alternate modification. An N6-(beta-hydroxybutyryl)lysine; alternate modification is found at Lys-15. Lys-15 bears the N6-acetyllysine; alternate mark. An N6-lactoyllysine; alternate modification is found at Lys-15. Residue Lys-15 is modified to N6-glutaryllysine; alternate. Position 15 is an N6-succinyllysine; alternate (Lys-15). A Citrulline; alternate modification is found at Arg-18. Arg-18 is modified (asymmetric dimethylarginine; by CARM1; alternate). An N6-(2-hydroxyisobutyryl)lysine; alternate mark is found at Lys-19 and Lys-24. Residues Lys-19 and Lys-24 each carry the N6-(beta-hydroxybutyryl)lysine; alternate modification. An N6-acetyllysine; alternate mark is found at Lys-19 and Lys-24. N6-crotonyllysine; alternate is present on residues Lys-19 and Lys-24. Lys-19 and Lys-24 each carry N6-methyllysine; alternate. 2 positions are modified to N6-lactoyllysine; alternate: Lys-19 and Lys-24. N6-glutaryllysine; alternate occurs at positions 19 and 24. An N6-butyryllysine; alternate mark is found at Lys-19 and Lys-24. Lys-19 carries the N6-decanoyllysine lipid modification. Arg-27 carries the citrulline modification. Lys-28 is subject to N6,N6,N6-trimethyllysine; alternate. Residue Lys-28 is modified to N6,N6-dimethyllysine; alternate. Lys-28 carries the N6-(2-hydroxyisobutyryl)lysine; alternate modification. Position 28 is an N6-acetyllysine; alternate (Lys-28). Lys-28 carries the N6-crotonyllysine; alternate modification. Lys-28 carries the N6-methyllysine; alternate modification. Residue Lys-28 is modified to N6-lactoyllysine; alternate. Position 28 is an N6-glutaryllysine; alternate (Lys-28). Ser-29 is modified (ADP-ribosylserine; alternate). Residue Ser-29 is modified to Phosphoserine; alternate; by AURKB, AURKC and RPS6KA5. Residue Lys-37 is modified to N6,N6,N6-trimethyllysine; alternate. Lys-37 carries the post-translational modification N6,N6-dimethyllysine; alternate. Residue Lys-37 is modified to N6-(2-hydroxyisobutyryl)lysine; alternate. The residue at position 37 (Lys-37) is an N6-acetyllysine; alternate. N6-methyllysine; alternate is present on Lys-37. N6-methyllysine is present on Lys-38. Position 42 is a phosphotyrosine (Tyr-42). Position 57 is an N6,N6,N6-trimethyllysine; alternate (Lys-57). Residue Lys-57 is modified to N6-(2-hydroxyisobutyryl)lysine; alternate. Lys-57 is subject to N6-(beta-hydroxybutyryl)lysine; alternate. Residue Lys-57 is modified to N6-acetyllysine; alternate. N6-crotonyllysine; alternate is present on Lys-57. Position 57 is an N6-lactoyllysine; alternate (Lys-57). Residue Lys-57 is modified to N6-glutaryllysine; alternate. The residue at position 57 (Lys-57) is an N6-succinyllysine; alternate. Lys-57 bears the N6-methyllysine; by EHMT2; alternate mark. Ser-58 is subject to Phosphoserine. Residues Lys-65 and Lys-80 each carry the N6-(2-hydroxyisobutyryl)lysine; alternate modification. N6-methyllysine; alternate occurs at positions 65 and 80. Residue Lys-80 is modified to N6,N6,N6-trimethyllysine; alternate. The residue at position 80 (Lys-80) is an N6,N6-dimethyllysine; alternate. N6-acetyllysine; alternate is present on Lys-80. Position 80 is an N6-lactoyllysine; alternate (Lys-80). Lys-80 carries the N6-glutaryllysine; alternate modification. Lys-80 bears the N6-succinyllysine; alternate mark. Thr-81 carries the post-translational modification Phosphothreonine. Phosphoserine is present on Ser-87. The residue at position 108 (Thr-108) is a Phosphothreonine. Cys-111 carries S-palmitoyl cysteine lipidation. Lys-116 and Lys-123 each carry N6-acetyllysine; alternate. Lys-116 and Lys-123 each carry N6-glutaryllysine; alternate. An N6-(2-hydroxyisobutyryl)lysine; alternate modification is found at Lys-123. Lys-123 bears the N6-methyllysine; alternate mark. Lys-123 carries the N6-succinyllysine; alternate modification.

This sequence belongs to the histone H3 family. The nucleosome is a histone octamer containing two molecules each of H2A, H2B, H3 and H4 assembled in one H3-H4 heterotetramer and two H2A-H2B heterodimers. The octamer wraps approximately 147 bp of DNA. During nucleosome assembly the chaperone ASF1A interacts with the histone H3-H4 heterodimer (via C-terminus of H3); this interaction is direct. Interacts with DNAJC9, CHAF1A and CHAF1B. Interacts with NASP; NASP is a histone chaperone that stabilizes and maintains a soluble pool of Histone H3-H4 dimers. Post-translationally, acetylation is generally linked to gene activation. Acetylation on Lys-10 (H3K9ac) impairs methylation at Arg-9 (H3R8me2s). Acetylation on Lys-19 (H3K18ac) and Lys-24 (H3K24ac) favors methylation at Arg-18 (H3R17me). Acetylation at Lys-123 (H3K122ac) by EP300/p300 plays a central role in chromatin structure: localizes at the surface of the histone octamer and stimulates transcription, possibly by promoting nucleosome instability. In terms of processing, citrullination at Arg-9 (H3R8ci) and/or Arg-18 (H3R17ci) by PADI4 impairs methylation and represses transcription. Asymmetric dimethylation at Arg-18 (H3R17me2a) by CARM1 is linked to gene activation. Symmetric dimethylation at Arg-9 (H3R8me2s) by PRMT5 is linked to gene repression. Asymmetric dimethylation at Arg-3 (H3R2me2a) by PRMT6 is linked to gene repression and is mutually exclusive with H3 Lys-5 methylation (H3K4me2 and H3K4me3). H3R2me2a is present at the 3' of genes regardless of their transcription state and is enriched on inactive promoters, while it is absent on active promoters. Post-translationally, methylation at Lys-5 (H3K4me), Lys-37 (H3K36me) and Lys-80 (H3K79me) are linked to gene activation. Methylation at Lys-5 (H3K4me) facilitates subsequent acetylation of H3 and H4. Methylation at Lys-80 (H3K79me) is associated with DNA double-strand break (DSB) responses and is a specific target for TP53BP1. Methylation at Lys-10 (H3K9me) and Lys-28 (H3K27me) are linked to gene repression. Methylation at Lys-10 (H3K9me) is a specific target for HP1 proteins (CBX1, CBX3 and CBX5) and prevents subsequent phosphorylation at Ser-11 (H3S10ph) and acetylation of H3 and H4. Methylation at Lys-5 (H3K4me) and Lys-80 (H3K79me) require preliminary monoubiquitination of H2B at 'Lys-120'. Methylation at Lys-10 (H3K9me) and Lys-28 (H3K27me) are enriched in inactive X chromosome chromatin. Monomethylation at Lys-57 (H3K56me1) by EHMT2/G9A in G1 phase promotes interaction with PCNA and is required for DNA replication. In terms of processing, phosphorylated at Thr-4 (H3T3ph) by VRK1. Phosphorylated at Thr-4 (H3T3ph) by HASPIN during prophase and dephosphorylated during anaphase. Phosphorylation at Ser-11 (H3S10ph) by AURKB is crucial for chromosome condensation and cell-cycle progression during mitosis and meiosis. In addition phosphorylation at Ser-11 (H3S10ph) by RPS6KA4 and RPS6KA5 is important during interphase because it enables the transcription of genes following external stimulation, like mitogens, stress, growth factors or UV irradiation and result in the activation of genes, such as c-fos and c-jun. Phosphorylation at Ser-11 (H3S10ph), which is linked to gene activation, prevents methylation at Lys-10 (H3K9me) but facilitates acetylation of H3 and H4. Phosphorylation at Ser-11 (H3S10ph) by AURKB mediates the dissociation of HP1 proteins (CBX1, CBX3 and CBX5) from heterochromatin. Phosphorylation at Ser-11 (H3S10ph) is also an essential regulatory mechanism for neoplastic cell transformation. Phosphorylated at Ser-29 (H3S28ph) by MAP3K20 isoform 1, RPS6KA5 or AURKB during mitosis or upon ultraviolet B irradiation. Phosphorylation at Thr-7 (H3T6ph) by PRKCB is a specific tag for epigenetic transcriptional activation that prevents demethylation of Lys-5 (H3K4me) by LSD1/KDM1A. At centromeres, specifically phosphorylated at Thr-12 (H3T11ph) from prophase to early anaphase, by DAPK3 and PKN1. Phosphorylation at Thr-12 (H3T11ph) by PKN1 or isoform M2 of PKM (PKM2) is a specific tag for epigenetic transcriptional activation that promotes demethylation of Lys-10 (H3K9me) by KDM4C/JMJD2C. Phosphorylation at Tyr-42 (H3Y41ph) by JAK2 promotes exclusion of CBX5 (HP1 alpha) from chromatin. Monoubiquitinated by RAG1 in lymphoid cells, monoubiquitination is required for V(D)J recombination. Ubiquitinated by the CUL4-DDB-RBX1 complex in response to ultraviolet irradiation. This may weaken the interaction between histones and DNA and facilitate DNA accessibility to repair proteins. Post-translationally, lysine deamination at Lys-5 (H3K4all) to form allysine is mediated by LOXL2. Allysine formation by LOXL2 only takes place on H3K4me3 and results in gene repression. In terms of processing, crotonylation (Kcr) is specifically present in male germ cells and marks testis-specific genes in post-meiotic cells, including X-linked genes that escape sex chromosome inactivation in haploid cells. Crotonylation marks active promoters and enhancers and confers resistance to transcriptional repressors. It is also associated with post-meiotically activated genes on autosomes. Butyrylation of histones marks active promoters and competes with histone acetylation. It is present during late spermatogenesis. Post-translationally, succinylation at Lys-80 (H3K79succ) by KAT2A takes place with a maximum frequency around the transcription start sites of genes. It gives a specific tag for epigenetic transcription activation. Desuccinylation at Lys-123 (H3K122succ) by SIRT7 in response to DNA damage promotes chromatin condensation and double-strand breaks (DSBs) repair. In terms of processing, serine ADP-ribosylation by PARP1 or PARP2 constitutes the primary form of ADP-ribosylation of proteins in response to DNA damage. Serine ADP-ribosylation at Ser-11 (H3S10ADPr) promotes recruitment of CHD1L. H3S10ADPr is mutually exclusive with phosphorylation at Ser-11 (H3S10ph) and impairs acetylation at Lys-10 (H3K9ac). Serotonylated by TGM2 at Gln-6 (H3Q5ser) during serotonergic neuron differentiation. H3Q5ser is associated with trimethylation of Lys-5 (H3K4me3) and enhances general transcription factor IID (TFIID) complex-binding to H3K4me3, thereby facilitating transcription. Post-translationally, dopaminylated by TGM2 at Gln-6 (H3Q5dop) in ventral tegmental area (VTA) neurons. H3Q5dop mediates neurotransmission-independent role of nuclear dopamine by regulating relapse-related transcriptional plasticity in the reward system. In terms of processing, lactylated in macrophages by EP300/P300 by using lactoyl-CoA directly derived from endogenous or exogenous lactate, leading to stimulates gene transcription.

It localises to the nucleus. It is found in the chromosome. Core component of nucleosome. Nucleosomes wrap and compact DNA into chromatin, limiting DNA accessibility to the cellular machineries which require DNA as a template. Histones thereby play a central role in transcription regulation, DNA repair, DNA replication and chromosomal stability. DNA accessibility is regulated via a complex set of post-translational modifications of histones, also called histone code, and nucleosome remodeling. This is Histone H3.2 from Cricetulus longicaudatus (Long-tailed dwarf hamster).